The chain runs to 349 residues: Isopentenyl-diphosphate delta-isomerase (349 aa).

8–9 (RK) lines the substrate pocket. FMN is bound by residues Ser66, 67-69 (SMT), Ser97, and Asn125. 97–99 (STR) is a binding site for substrate. Gln160 serves as a coordination point for substrate. Mg(2+) is bound at residue Glu161. Residues Lys192, Thr222, 272 to 274 (GMK), and 293 to 294 (AR) each bind FMN.

It belongs to the IPP isomerase type 2 family. As to quaternary structure, homooctamer. Dimer of tetramers. The cofactor is FMN. Requires NADPH as cofactor. Mg(2+) serves as cofactor.

The protein resides in the cytoplasm. The enzyme catalyses isopentenyl diphosphate = dimethylallyl diphosphate. Its function is as follows. Involved in the biosynthesis of isoprenoids. Catalyzes the 1,3-allylic rearrangement of the homoallylic substrate isopentenyl (IPP) to its allylic isomer, dimethylallyl diphosphate (DMAPP). The protein is Isopentenyl-diphosphate delta-isomerase of Oceanobacillus iheyensis (strain DSM 14371 / CIP 107618 / JCM 11309 / KCTC 3954 / HTE831).